A 223-amino-acid chain; its full sequence is Ribonuclease 3 (223 aa).

An RNase III domain is found at 4-127 (YSQLEKRLNY…IIGAVYLEAG (124 aa)). Glu40 lines the Mg(2+) pocket. Asp44 is an active-site residue. Positions 113 and 116 each coordinate Mg(2+). Glu116 is an active-site residue. Positions 154-223 (DYKTALQELT…AKIALEALKK (70 aa)) constitute a DRBM domain.

The protein belongs to the ribonuclease III family. In terms of assembly, homodimer. Mg(2+) serves as cofactor.

It is found in the cytoplasm. It catalyses the reaction Endonucleolytic cleavage to 5'-phosphomonoester.. Digests double-stranded RNA. Involved in the processing of primary rRNA transcript to yield the immediate precursors to the large and small rRNAs (23S and 16S). Processes some mRNAs, and tRNAs when they are encoded in the rRNA operon. Processes pre-crRNA and tracrRNA of type II CRISPR loci if present in the organism. This chain is Ribonuclease 3, found in Sulfurovum sp. (strain NBC37-1).